Consider the following 351-residue polypeptide: Heme A synthase (351 aa).

8 helical membrane passes run 17 to 37 (WLIL…ATRL), 103 to 123 (LIGL…WLGQ), 129 to 149 (LVGL…MVSS), 164 to 184 (LMTH…LWLD), 201 to 221 (AMAL…VAGL), 261 to 281 (FNHR…AWAF), 289 to 309 (EFAF…LTLV), and 316 to 336 (LALV…YTVW). Position 263 (H263) interacts with heme. H320 contacts heme.

This sequence belongs to the COX15/CtaA family. Type 2 subfamily. As to quaternary structure, interacts with CtaB. Requires heme b as cofactor.

The protein localises to the cell membrane. It carries out the reaction Fe(II)-heme o + 2 A + H2O = Fe(II)-heme a + 2 AH2. Its pathway is porphyrin-containing compound metabolism; heme A biosynthesis; heme A from heme O: step 1/1. Catalyzes the conversion of heme O to heme A by two successive hydroxylations of the methyl group at C8. The first hydroxylation forms heme I, the second hydroxylation results in an unstable dihydroxymethyl group, which spontaneously dehydrates, resulting in the formyl group of heme A. The sequence is that of Heme A synthase from Hyphomonas neptunium (strain ATCC 15444).